The chain runs to 75 residues: Veswaprin-b (75 aa).

The N-terminal stretch at 1–24 is a signal peptide; sequence MSSGGLLLLLGLLTLWAELTPISG. Positions 23-42 are disordered; that stretch reads SGQDRPKKPGLRPPRPQKPP. The region spanning 27–72 is the WAP; atypical domain; it reads RPKKPGLRPPRPQKPPCVRECKNDWRCPGEQKCCRYGCIYECRDPI. 3 disulfides stabilise this stretch: C43/C64, C47/C59, and C53/C68.

This sequence belongs to the venom waprin family. As to expression, expressed by the venom gland.

It localises to the secreted. Damages membranes of susceptible bacteria. Has no hemolytic activity. Not toxic to mice. Does not inhibit the proteinases elastase and cathepsin G. In Demansia vestigiata (Lesser black whip snake), this protein is Veswaprin-b.